The primary structure comprises 98 residues: Cysteine-rich and transmembrane domain-containing protein WIH2 (98 aa).

A disordered region spans residues Met-1–Ser-77. Positions Val-9–Gly-21 are enriched in pro residues. Residues Tyr-37–Gln-55 are compositionally biased toward low complexity. Over residues Gly-56 to Gln-70 the composition is skewed to pro residues. A helical membrane pass occupies residues Gln-75–Cys-92.

This sequence belongs to the CYSTM1 family. In terms of tissue distribution, expressed in floral organ primordia.

It is found in the membrane. In terms of biological role, required for the promotion of megasporogenesis, or promotion of germ cell formation from somatic precursor cells. Acts redundantly with WIH1. Functions in a genetic pathway downstream of SPL/NZZ and WUS and together with TRN2 in promoting megasporogenesis. The chain is Cysteine-rich and transmembrane domain-containing protein WIH2 from Arabidopsis thaliana (Mouse-ear cress).